Here is a 169-residue protein sequence, read N- to C-terminus: Ecotin (169 aa).

The first 21 residues, 1-21, serve as a signal peptide directing secretion; it reads MKKCSIILASVLLATSINAIA. A disulfide bridge connects residues cysteine 76 and cysteine 113.

The protein belongs to the protease inhibitor I11 (ecotin) family. Homodimer.

Its subcellular location is the periplasm. In terms of biological role, general inhibitor of pancreatic serine proteases: inhibits chymotrypsin, trypsin, elastases, factor X, kallikrein as well as a variety of other proteases. This is Ecotin from Yersinia pseudotuberculosis serotype O:1b (strain IP 31758).